A 302-amino-acid chain; its full sequence is Ubiquinone biosynthesis protein COQ4, mitochondrial (302 aa).

A mitochondrion-targeting transit peptide spans 1–19 (MNSSPARAVRALVQSQSRQ). Zn(2+) is bound by residues H176, D177, H180, and E192. A compositionally biased stretch (basic and acidic residues) spans 268-282 (PPPDMRDARKRERDA). The segment at 268–302 (PPPDMRDARKRERDARRRRKQLETEAQQGLDAASL) is disordered.

Belongs to the COQ4 family. As to quaternary structure, component of a multi-subunit COQ enzyme complex, composed of at least COQ3, COQ4, COQ5, COQ6, COQ7 and COQ9. It depends on Zn(2+) as a cofactor.

The protein resides in the mitochondrion inner membrane. The catalysed reaction is a 4-hydroxy-3-methoxy-5-(all-trans-polyprenyl)benzoate + H(+) = a 2-methoxy-6-(all-trans-polyprenyl)phenol + CO2. It participates in cofactor biosynthesis; ubiquinone biosynthesis. Functionally, lyase that catalyzes the C1-decarboxylation of 4-hydroxy-3-methoxy-5-(all-trans-polyprenyl)benzoic acid into 2-methoxy-6-(all-trans-polyprenyl)phenol during ubiquinone biosynthesis. The polypeptide is Ubiquinone biosynthesis protein COQ4, mitochondrial (Pyricularia oryzae (strain 70-15 / ATCC MYA-4617 / FGSC 8958) (Rice blast fungus)).